A 137-amino-acid polypeptide reads, in one-letter code: Large ribosomal subunit protein uL16 (137 aa).

It belongs to the universal ribosomal protein uL16 family. In terms of assembly, part of the 50S ribosomal subunit.

Its function is as follows. Binds 23S rRNA and is also seen to make contacts with the A and possibly P site tRNAs. This chain is Large ribosomal subunit protein uL16, found in Azorhizobium caulinodans (strain ATCC 43989 / DSM 5975 / JCM 20966 / LMG 6465 / NBRC 14845 / NCIMB 13405 / ORS 571).